The primary structure comprises 207 residues: A-type ATP synthase subunit E (207 aa).

The protein belongs to the V-ATPase E subunit family. Has multiple subunits with at least A(3), B(3), C, D, E, F, H, I and proteolipid K(x).

The protein localises to the cell membrane. In terms of biological role, component of the A-type ATP synthase that produces ATP from ADP in the presence of a proton gradient across the membrane. In Hyperthermus butylicus (strain DSM 5456 / JCM 9403 / PLM1-5), this protein is A-type ATP synthase subunit E.